The following is a 242-amino-acid chain: DNA repair protein RecO (242 aa).

Belongs to the RecO family.

In terms of biological role, involved in DNA repair and RecF pathway recombination. The sequence is that of DNA repair protein RecO from Laribacter hongkongensis (strain HLHK9).